We begin with the raw amino-acid sequence, 221 residues long: Oxaloacetate tautomerase FAHD1, mitochondrial (221 aa).

The N-terminal 24 residues, 1-24, are a transit peptide targeting the mitochondrion; the sequence is MAASRPLSRFWEWGKNIVCVGRNY. S37 is modified (phosphoserine). The Mg(2+) site is built by E68, E70, and D99. The residue at position 110 (K110) is an N6-acetyllysine. K112 bears the N6-succinyllysine mark.

This sequence belongs to the FAH family. As to quaternary structure, homodimer. The cofactor is Mg(2+). It depends on Mn(2+) as a cofactor.

The protein resides in the mitochondrion. It localises to the cytoplasm. It is found in the cytosol. It catalyses the reaction oxaloacetate = enol-oxaloacetate. The catalysed reaction is oxaloacetate + H(+) = pyruvate + CO2. It carries out the reaction a 3-acylpyruvate + H2O = a carboxylate + pyruvate + H(+). The enzyme catalyses acetylpyruvate + H2O = acetate + pyruvate + H(+). It catalyses the reaction 3-fumarylpyruvate + H2O = fumarate + pyruvate + H(+). Oxaloacetate decarboxylation is competitively inhibited by oxalate. Tautomerase that converts enol-oxaloacetate, a strong inhibitor of succinate dehydrogenase, to the physiological keto form of oxaloacetate. It is thereby required to maximize aerobic respiration efficiency by preventing succinate dehydrogenase inhibition. Also acts as a weak oxaloacetate decarboxylase (ODx), catalyzing the decarboxylation of oxaloacetate (OAA) to pyruvate and CO(2), and as such is likely a regulatory enzyme in the TCA cycle. Also displays acylpyruvase activity, being able to hydrolyze acetylpyruvate and fumarylpyruvate in vitro. The sequence is that of Oxaloacetate tautomerase FAHD1, mitochondrial from Bos taurus (Bovine).